The following is an 881-amino-acid chain: Valine--tRNA ligase (881 aa).

Residues 48-58 carry the 'HIGH' region motif; the sequence is PNITGKLHLGH. A 'KMSKS' region motif is present at residues 527 to 531; sequence KMSKS. Position 530 (lysine 530) interacts with ATP. Coiled coils occupy residues 721–747 and 811–881; these read KNET…AEMN and LLDL…AALK.

Belongs to the class-I aminoacyl-tRNA synthetase family. ValS type 1 subfamily. Monomer.

The protein resides in the cytoplasm. The catalysed reaction is tRNA(Val) + L-valine + ATP = L-valyl-tRNA(Val) + AMP + diphosphate. Catalyzes the attachment of valine to tRNA(Val). As ValRS can inadvertently accommodate and process structurally similar amino acids such as threonine, to avoid such errors, it has a 'posttransfer' editing activity that hydrolyzes mischarged Thr-tRNA(Val) in a tRNA-dependent manner. This is Valine--tRNA ligase from Clostridium acetobutylicum (strain ATCC 824 / DSM 792 / JCM 1419 / IAM 19013 / LMG 5710 / NBRC 13948 / NRRL B-527 / VKM B-1787 / 2291 / W).